Consider the following 432-residue polypeptide: Fibroleukin (432 aa).

Residues 1–19 (MRLPGWLWLSSAVLAACRA) form the signal peptide. Asparagine 24 is a glycosylation site (N-linked (GlcNAc...) asparagine). The stretch at 71–157 (GSMEEVLKEV…QGRLETLHLV (87 aa)) forms a coiled coil. The interval 100–122 (QADDHRDPGGNGGNGAETAEDSR) is disordered. Residues asparagine 172, asparagine 228, asparagine 256, and asparagine 329 are each glycosylated (N-linked (GlcNAc...) asparagine). Positions 197–429 (PVQHLIYKDC…QAKMMIRPKN (233 aa)) constitute a Fibrinogen C-terminal domain. Cysteines 206 and 235 form a disulfide. Residues cysteine 364 and cysteine 377 are joined by a disulfide bond.

As to quaternary structure, homotetramer; disulfide-linked. Constitutively expressed in cytotoxic T-cells.

It is found in the secreted. Its function is as follows. Converts prothrombin to thrombin. The polypeptide is Fibroleukin (Fgl2) (Mus musculus (Mouse)).